A 345-amino-acid polypeptide reads, in one-letter code: Dihydroorotate dehydrogenase (quinone) (345 aa).

FMN-binding positions include 65–69 (AGLDK) and Thr89. Lys69 contributes to the substrate binding site. Substrate is bound at residue 114–118 (NRMGF). Asn142 and Asn175 together coordinate FMN. Asn175 is a substrate binding site. The Nucleophile role is filled by Ser178. Asn180 is a binding site for substrate. FMN is bound by residues Lys220 and Thr248. 249–250 (NT) is a binding site for substrate. FMN-binding positions include Gly271, Gly300, and 321–322 (YT).

This sequence belongs to the dihydroorotate dehydrogenase family. Type 2 subfamily. Monomer. It depends on FMN as a cofactor.

It is found in the cell membrane. It catalyses the reaction (S)-dihydroorotate + a quinone = orotate + a quinol. Its pathway is pyrimidine metabolism; UMP biosynthesis via de novo pathway; orotate from (S)-dihydroorotate (quinone route): step 1/1. Catalyzes the conversion of dihydroorotate to orotate with quinone as electron acceptor. This Burkholderia multivorans (strain ATCC 17616 / 249) protein is Dihydroorotate dehydrogenase (quinone).